Reading from the N-terminus, the 293-residue chain is Probable tRNA-splicing endonuclease subunit Sen2 (293 aa).

Catalysis depends on residues Y157, H165, and K204. The helical transmembrane segment at 267–287 threads the bilayer; that stretch reads VVFNHWGVILGFTVLSGLLVY.

The protein belongs to the tRNA-intron endonuclease family. TRNA splicing endonuclease is a heterotetramer composed of SEN2, SEN15, SEN34/LENG5 and SEN54.

The protein localises to the nucleus. It is found in the membrane. The enzyme catalyses pretRNA = a 3'-half-tRNA molecule with a 5'-OH end + a 5'-half-tRNA molecule with a 2',3'-cyclic phosphate end + an intron with a 2',3'-cyclic phosphate and a 5'-hydroxyl terminus.. In terms of biological role, constitutes one of the two catalytic subunit of the tRNA-splicing endonuclease complex, a complex responsible for identification and cleavage of the splice sites in pre-tRNA. It cleaves pre-tRNA at the 5'- and 3'-splice sites to release the intron. The products are an intron and two tRNA half-molecules bearing 2',3'-cyclic phosphate and 5'-OH termini. There are no conserved sequences at the splice sites, but the intron is invariably located at the same site in the gene, placing the splice sites an invariant distance from the constant structural features of the tRNA body. Probably carries the active site for 5'-splice site cleavage. This chain is Probable tRNA-splicing endonuclease subunit Sen2, found in Oryza sativa subsp. japonica (Rice).